We begin with the raw amino-acid sequence, 940 residues long: Leucine--tRNA ligase, mitochondrial (940 aa).

The 'HIGH' region motif lies at 54-64 (PYPSGALHMGH). The 'KMSKS' region signature appears at 638 to 642 (TINKL). K641 provides a ligand contact to ATP. A disordered region spans residues 724–744 (KEQHQHQQQQHQQPLPSSEFN).

The protein belongs to the class-I aminoacyl-tRNA synthetase family.

The protein localises to the mitochondrion. It carries out the reaction tRNA(Leu) + L-leucine + ATP = L-leucyl-tRNA(Leu) + AMP + diphosphate. This is Leucine--tRNA ligase, mitochondrial (mleuS) from Dictyostelium discoideum (Social amoeba).